The following is a 123-amino-acid chain: MRTQSLLLLGALLAVGSQLPAVFGRKKGEKSGGCPPDDGPCLLSVPDQCVEDSQCPLTRKCCYRACFRQCVPRVSVKLGSCPEDQLHCLSPMNHLCHKDSDCSGKKRCCHSACGRDCRDPARG.

Residues 1 to 24 (MRTQSLLLLGALLAVGSQLPAVFG) form the signal peptide. WAP domains lie at 27-74 (KGEK…VPRV) and 75-121 (SVKL…RDPA). Intrachain disulfides connect Cys34–Cys62, Cys41–Cys66, Cys49–Cys61, Cys55–Cys70, Cys81–Cys109, Cys88–Cys113, Cys96–Cys108, and Cys102–Cys117.

It is found in the secreted. Functionally, putative acid-stable proteinase inhibitor. This Gorilla gorilla gorilla (Western lowland gorilla) protein is WAP four-disulfide core domain protein 5 (WFDC5).